The following is a 328-amino-acid chain: Phosphate acyltransferase (328 aa).

Belongs to the PlsX family. In terms of assembly, homodimer. Probably interacts with PlsY.

It localises to the cytoplasm. The enzyme catalyses a fatty acyl-[ACP] + phosphate = an acyl phosphate + holo-[ACP]. The protein operates within lipid metabolism; phospholipid metabolism. In terms of biological role, catalyzes the reversible formation of acyl-phosphate (acyl-PO(4)) from acyl-[acyl-carrier-protein] (acyl-ACP). This enzyme utilizes acyl-ACP as fatty acyl donor, but not acyl-CoA. This chain is Phosphate acyltransferase, found in Campylobacter jejuni (strain RM1221).